A 414-amino-acid polypeptide reads, in one-letter code: Tryptophan synthase beta chain (414 aa).

A disordered region spans residues 1–26 (MVSTFSRQDQNYKNDDLNQPSKEGRF). The span at 10–26 (QNYKNDDLNQPSKEGRF) shows a compositional bias: basic and acidic residues. K109 is modified (N6-(pyridoxal phosphate)lysine).

This sequence belongs to the TrpB family. Tetramer of two alpha and two beta chains. Pyridoxal 5'-phosphate is required as a cofactor.

The catalysed reaction is (1S,2R)-1-C-(indol-3-yl)glycerol 3-phosphate + L-serine = D-glyceraldehyde 3-phosphate + L-tryptophan + H2O. Its pathway is amino-acid biosynthesis; L-tryptophan biosynthesis; L-tryptophan from chorismate: step 5/5. Functionally, the beta subunit is responsible for the synthesis of L-tryptophan from indole and L-serine. The protein is Tryptophan synthase beta chain of Prochlorococcus marinus (strain MIT 9312).